We begin with the raw amino-acid sequence, 210 residues long: 3-hexulose-6-phosphate synthase (210 aa).

It belongs to the HPS/KGPDC family. HPS subfamily.

It catalyses the reaction D-ribulose 5-phosphate + formaldehyde = D-arabino-hex-3-ulose 6-phosphate. It participates in one-carbon metabolism; formaldehyde assimilation via RuMP pathway; D-fructose 6-phosphate from D-ribulose 5-phosphate and formaldehyde: step 1/2. Catalyzes the condensation of ribulose 5-phosphate with formaldehyde to form 3-hexulose 6-phosphate. The chain is 3-hexulose-6-phosphate synthase from Staphylococcus aureus (strain bovine RF122 / ET3-1).